A 377-amino-acid polypeptide reads, in one-letter code: 2-aminoethylphosphonate--pyruvate transaminase (377 aa).

Lys-194 is modified (N6-(pyridoxal phosphate)lysine).

Belongs to the class-V pyridoxal-phosphate-dependent aminotransferase family. PhnW subfamily. As to quaternary structure, homodimer. It depends on pyridoxal 5'-phosphate as a cofactor.

It carries out the reaction (2-aminoethyl)phosphonate + pyruvate = phosphonoacetaldehyde + L-alanine. Involved in phosphonate degradation. This Cupriavidus taiwanensis (strain DSM 17343 / BCRC 17206 / CCUG 44338 / CIP 107171 / LMG 19424 / R1) (Ralstonia taiwanensis (strain LMG 19424)) protein is 2-aminoethylphosphonate--pyruvate transaminase.